A 117-amino-acid polypeptide reads, in one-letter code: Large ribosomal subunit protein bL19 (117 aa).

It belongs to the bacterial ribosomal protein bL19 family.

Functionally, this protein is located at the 30S-50S ribosomal subunit interface and may play a role in the structure and function of the aminoacyl-tRNA binding site. This Thermotoga neapolitana (strain ATCC 49049 / DSM 4359 / NBRC 107923 / NS-E) protein is Large ribosomal subunit protein bL19.